Here is a 228-residue protein sequence, read N- to C-terminus: Uridylate kinase (228 aa).

9–10 provides a ligand contact to ATP; the sequence is GS. G44 contacts UMP. Residues G45 and R49 each contribute to the ATP site. Residues D66 and 114–120 each bind UMP; that span reads IVAAQTT. The ATP site is built by T140, Y146, and D149.

The protein belongs to the UMP kinase family. As to quaternary structure, homohexamer.

The protein resides in the cytoplasm. The catalysed reaction is UMP + ATP = UDP + ADP. It participates in pyrimidine metabolism; CTP biosynthesis via de novo pathway; UDP from UMP (UMPK route): step 1/1. Inhibited by UTP. In terms of biological role, catalyzes the reversible phosphorylation of UMP to UDP. The polypeptide is Uridylate kinase (Haloarcula marismortui (strain ATCC 43049 / DSM 3752 / JCM 8966 / VKM B-1809) (Halobacterium marismortui)).